Reading from the N-terminus, the 251-residue chain is Aliphatic sulfonates import ATP-binding protein SsuB (251 aa).

In terms of domain architecture, ABC transporter spans 3–231 (VSINEVSKYF…PRNKTSQSFQ (229 aa)). ATP is bound at residue 39-46 (GPSGCGKS).

The protein belongs to the ABC transporter superfamily. Aliphatic sulfonates importer (TC 3.A.1.17.2) family. As to quaternary structure, the complex is composed of two ATP-binding proteins (SsuB), two transmembrane proteins (SsuC) and a solute-binding protein (SsuA).

Its subcellular location is the cell membrane. The catalysed reaction is ATP + H2O + aliphatic sulfonate-[sulfonate-binding protein]Side 1 = ADP + phosphate + aliphatic sulfonateSide 2 + [sulfonate-binding protein]Side 1.. Its function is as follows. Part of the ABC transporter complex SsuABC involved in aliphatic sulfonates import. Responsible for energy coupling to the transport system. In Bacillus anthracis, this protein is Aliphatic sulfonates import ATP-binding protein SsuB.